A 1576-amino-acid chain; its full sequence is Disco-interacting protein 2 homolog B (1576 aa).

Phosphoserine is present on residues Ser9, Ser50, and Ser53. A DMAP1-binding domain is found at 12-131 (AVAALPPEVR…PMPTKRRSTF (120 aa)). Residues 31–167 (LSEGDITQKG…AALSAALQQS (137 aa)) form a disordered region. The span at 52-62 (YSPQTQETDSA) shows a compositional bias: polar residues. A compositionally biased stretch (low complexity) spans 70 to 83 (QTPAPSAAQTSAPS). Residue Thr71 is modified to Phosphothreonine. A compositionally biased stretch (basic and acidic residues) spans 92-104 (GARDERYRSDIHT). Ser100 is modified (phosphoserine). Position 140 is a phosphothreonine (Thr140). A phosphoserine mark is found at Ser146, Ser148, and Ser153. The segment covering 155–167 (RRQAALSAALQQS) has biased composition (low complexity). Ser178, Ser193, and Ser203 each carry phosphoserine. The tract at residues 179–201 (IQGSSTSSSASSTLSHGEVKGTS) is disordered. Over residues 182–193 (SSTSSSASSTLS) the composition is skewed to low complexity. The segment at 217–246 (SAPPDVTTTTSSSSSSSSIRPANIDLPPSG) is disordered. Residues 223–234 (TTTTSSSSSSSS) are compositionally biased toward low complexity. Ser259 carries the post-translational modification Phosphoserine.

Belongs to the DIP2 family. In terms of assembly, interacts with alpha-tubulin. Moderately expressed in adult brain, placenta, skeletal muscle, heart, kidney, pancreas, lung, spleen and colon. Expression was weaker in adult liver, kidney, spleen, and ovary, and in fetal brain and liver. In the brain, it is expressed in the cerebral cortex; the frontal, parietal, occipital and temporal lobes; the paracentral gyrus; the pons; the corpus callosum and the hippocampus. Highest expression levels in the brain were found in the cerebral cortex and the frontal and parietal lobes.

The protein resides in the cell projection. The protein localises to the dendrite. It is found in the axon. Its subcellular location is the perikaryon. Its function is as follows. Negatively regulates axonal outgrowth and is essential for normal synaptic transmission. Not required for regulation of axon polarity. Promotes acetylation of alpha-tubulin. The chain is Disco-interacting protein 2 homolog B (DIP2B) from Homo sapiens (Human).